A 476-amino-acid chain; its full sequence is MDLETSEISNYKSSVVLSKLASNEQHGENSPYFDGWKAYDNDPFHLVNNLNGVIQMGLAENQLSVDLIEEWIKRNPKASICTNDGIESFRRIANFQDYHGLPEFTNAIAKFMEKTRGGKVKFDAKRVVMAGGATGANETLILCLADPGDAFLVPTPYYPGFNRDLRWRSGVQLLPISCKSCNNFKITIEAIEEAYEKGQQANVKIKGLILTNPCNPLGTILDRDTLKKISTFTNEHNIHLVCDEIYAATVFNSPKFVSIAEIINEDNCINKDLVHIVSSLSKDLGFPGFRVGIVYSFNDDVVNCARKMSSFGLVSTQTQHLLAFMLSDDEFVEEFLIESAKRLRERYEKFTRGLEEIGIKCLESNAGVYCWMDLRSLLKEATLDAEMSLWKLIINEVKLNVSPGSSFNCSEVGWFRVCFANIDDQTMEIALARIRMFMDAYNNVNKNGVMKNKHNGRGTTYDLTPQMGSTMKMLLA.

Lys282 bears the N6-(pyridoxal phosphate)lysine mark.

It belongs to the class-I pyridoxal-phosphate-dependent aminotransferase family. Homodimer. Requires pyridoxal 5'-phosphate as cofactor.

It carries out the reaction S-adenosyl-L-methionine = 1-aminocyclopropane-1-carboxylate + S-methyl-5'-thioadenosine + H(+). Its pathway is alkene biosynthesis; ethylene biosynthesis via S-adenosyl-L-methionine; ethylene from S-adenosyl-L-methionine: step 1/2. Its function is as follows. Catalyzes the formation of 1-aminocyclopropane-1-carboxylate, a direct precursor of ethylene in higher plants. This Solanum lycopersicum (Tomato) protein is 1-aminocyclopropane-1-carboxylate synthase 4 (ACS4).